The sequence spans 179 residues: O-acetyl-ADP-ribose deacetylase (179 aa).

The 175-residue stretch at 1–175 (MTSRLQVIQG…LYARLLTQQG (175 aa)) folds into the Macro domain. Residues 11–12 (DI), asparagine 25, 33–35 (GVD), and 122–126 (STGVY) each bind substrate. The active-site Proton acceptor is the aspartate 35.

Belongs to the MacroD-type family. YmdB subfamily. Homodimer. Interacts with RNase III.

The catalysed reaction is 3''-O-acetyl-ADP-D-ribose + H2O = ADP-D-ribose + acetate + H(+). The enzyme catalyses 2''-O-acetyl-ADP-D-ribose + H2O = ADP-D-ribose + acetate + H(+). In terms of biological role, deacetylates O-acetyl-ADP ribose to yield ADP-ribose and free acetate. Down-regulates ribonuclease 3 (RNase III) activity. Acts by interacting directly with the region of the ribonuclease that is required for dimerization/activation. This chain is O-acetyl-ADP-ribose deacetylase, found in Salmonella newport (strain SL254).